Here is a 142-residue protein sequence, read N- to C-terminus: MKVNPFVSSDSGKSRKAHFNAPSHERRRIMSAPLTKELRTKHGIRAIPIRTDDEVVVMRGRHKGNTGRVLRCYRKKFVIHIDKITREKANGSTVHIGIHPSKVAITKLKLDKDRRALVERKAAGRSRVTGILKGKHTDETVN.

Polar residues predominate over residues 1-11 (MKVNPFVSSDS). Positions 1 to 24 (MKVNPFVSSDSGKSRKAHFNAPSH) are disordered.

It belongs to the universal ribosomal protein uL24 family.

The protein is Large ribosomal subunit protein uL24 (rpl-26) of Caenorhabditis elegans.